Reading from the N-terminus, the 514-residue chain is ATP synthase subunit alpha (514 aa).

170-177 (GDRQIGKT) contributes to the ATP binding site.

It belongs to the ATPase alpha/beta chains family. F-type ATPases have 2 components, CF(1) - the catalytic core - and CF(0) - the membrane proton channel. CF(1) has five subunits: alpha(3), beta(3), gamma(1), delta(1), epsilon(1). CF(0) has three main subunits: a(1), b(2) and c(9-12). The alpha and beta chains form an alternating ring which encloses part of the gamma chain. CF(1) is attached to CF(0) by a central stalk formed by the gamma and epsilon chains, while a peripheral stalk is formed by the delta and b chains.

It localises to the cell inner membrane. The catalysed reaction is ATP + H2O + 4 H(+)(in) = ADP + phosphate + 5 H(+)(out). In terms of biological role, produces ATP from ADP in the presence of a proton gradient across the membrane. The alpha chain is a regulatory subunit. The chain is ATP synthase subunit alpha from Alcanivorax borkumensis (strain ATCC 700651 / DSM 11573 / NCIMB 13689 / SK2).